The primary structure comprises 54 residues: Conotoxin vc5a (54 aa).

Residues 1–14 (VILLLITSTPSVDA) form the signal peptide. The propeptide occupies 15 to 42 (RLKAKDNMPLASFHDNAKRTLQTRLINT). Residue P49 is modified to 4-hydroxyproline. I53 is subject to Isoleucine amide.

It belongs to the conotoxin T superfamily. Contains 2 disulfide bonds that can be either 'C1-C3, C2-C4' or 'C1-C4, C2-C3', since these disulfide connectivities have been observed for conotoxins with cysteine framework V (for examples, see AC P0DQQ7 and AC P81755). Expressed by the venom duct.

The protein resides in the secreted. The sequence is that of Conotoxin vc5a from Conus victoriae (Queen Victoria cone).